The sequence spans 163 residues: RxLR effector protein PITG_13625 (163 aa).

The first 23 residues, 1 to 23 (MKVSKAIVALAALCMALLAPAAG), serve as a signal peptide directing secretion. Positions 37–52 (RHLRQESAELATTPEE) match the RxLR-dEER motif.

It belongs to the RxLR effector family.

The protein resides in the secreted. It localises to the host cell membrane. Effector that enhances P.infestans colonization of Nicotiana benthamiana leaves. This Phytophthora infestans (strain T30-4) (Potato late blight agent) protein is RxLR effector protein PITG_13625.